A 97-amino-acid chain; its full sequence is MFAVIKTGGKQYRVEPGMLLKVEKLPADVGETVEIEASLIKDDQGNIKTEGKVEAEVVEHGKHKKVLVFHFKRKKNYKKLNGHRQPYTLIKIKDIKA.

It belongs to the bacterial ribosomal protein bL21 family. In terms of assembly, part of the 50S ribosomal subunit. Contacts protein L20.

In terms of biological role, this protein binds to 23S rRNA in the presence of protein L20. The sequence is that of Large ribosomal subunit protein bL21 from Persephonella marina (strain DSM 14350 / EX-H1).